We begin with the raw amino-acid sequence, 65 residues long: MGMRMVFTVFLLVVLATTVVSFTSDRASDGRNAAANDKASDLAALAVRGCCHDIFCKHNNPDICG.

The first 21 residues, 1–21, serve as a signal peptide directing secretion; sequence MGMRMVFTVFLLVVLATTVVS. Positions 22 to 48 are excised as a propeptide; the sequence is FTSDRASDGRNAAANDKASDLAALAVR. 2 cysteine pairs are disulfide-bonded: Cys50/Cys56 and Cys51/Cys64. Residue Cys64 is modified to Cysteine amide.

It belongs to the conotoxin A superfamily. Expressed by the venom duct.

The protein resides in the secreted. The polypeptide is Conotoxin Bu19 (Conus bullatus (Bubble cone)).